The sequence spans 537 residues: Lysine--tRNA ligase (537 aa).

The 'HIGH' region signature appears at 30–38; sequence PSGNIHIGN. A 'KMSKS' region motif is present at residues 276-280; that stretch reads AMSSS.

This sequence belongs to the class-I aminoacyl-tRNA synthetase family.

It is found in the cytoplasm. The catalysed reaction is tRNA(Lys) + L-lysine + ATP = L-lysyl-tRNA(Lys) + AMP + diphosphate. This chain is Lysine--tRNA ligase, found in Methanosarcina barkeri (strain Fusaro / DSM 804).